Consider the following 119-residue polypeptide: Protein Wnt-4 (119 aa).

Residue S1 is the site of O-palmitoleoyl serine; by PORCN attachment. 2 disulfide bridges follow: C69-C100 and C85-C95. Residue N86 is glycosylated (N-linked (GlcNAc...) asparagine).

Belongs to the Wnt family. Palmitoleoylation is required for efficient binding to frizzled receptors. Depalmitoleoylation leads to Wnt signaling pathway inhibition.

It is found in the secreted. It localises to the extracellular space. Its subcellular location is the extracellular matrix. In terms of biological role, ligand for members of the frizzled family of seven transmembrane receptors. Plays an important role in embryonic development. The polypeptide is Protein Wnt-4 (WNT-4) (Plestiodon skiltonianus (Western skink)).